The following is a 46-amino-acid chain: Iota-conotoxin-like R11.17 (46 aa).

2 positions are modified to 4-hydroxyproline: Pro2 and Pro11. 4 disulfide bridges follow: Cys5-Cys19, Cys12-Cys22, Cys18-Cys27, and Cys21-Cys38. Pro29 bears the 4-hydroxyproline mark. Phe44 is subject to D-phenylalanine.

This sequence belongs to the conotoxin I1 superfamily. In terms of tissue distribution, expressed by the venom duct.

It localises to the secreted. In terms of biological role, iota-conotoxins bind to voltage-gated sodium channels (Nav) and act as agonists by shifting the voltage-dependence of activation to more hyperpolarized levels. Produces general excitatory symptoms. The polypeptide is Iota-conotoxin-like R11.17 (Conus radiatus (Rayed cone)).